The sequence spans 590 residues: Melanophilin (590 aa).

Residues 4–124 form the RabBD domain; that stretch reads RLDLSTLTDE…IGSLEWYYQH (121 aa). The FYVE-type zinc finger occupies 64–107; sequence CARCLQPYRLLLNSRRQCLECSLFVCKSCSHAHPEEQGWLCDPC. Disordered stretches follow at residues 147-182, 215-276, 311-335, 361-472, and 485-590; these read GGGGSEPSLEEGNGDSEQTDEDGDLDTEARDQPLNS, SVPE…AELD, DTSDEDSIQGPRAASQHSKRRARTV, VLPP…SEIS, and GLTV…AQQP. The segment covering 154–172 has biased composition (acidic residues); that stretch reads SLEEGNGDSEQTDEDGDLD. Residues 215–238 are compositionally biased toward polar residues; that stretch reads SVPESAHSLQSLSGEPYSEDTTSL. Positions 339 to 485 form a coiled coil; that stretch reads QILELNKRMS…SRIAALRAAG (147 aa). Over residues 391 to 401 the composition is skewed to low complexity; the sequence is LTSNISGSSTS. A compositionally biased stretch (basic and acidic residues) spans 424–433; the sequence is GHMETQERNP.

In terms of assembly, binds RAB27A that has been activated by GTP-binding via its N-terminus. Binds MYO5A via its C-terminal coiled coil domain. Highly expressed in embryos at day 7; not detectable at day 11. Highly expressed in adult stomach; detected at lower levels in kidney, lung, skin and small intestine. Detected in melanocytes.

It is found in the melanosome. Functionally, rab effector protein involved in melanosome transport. Serves as link between melanosome-bound RAB27A and the motor protein MYO5A. The protein is Melanophilin (Mlph) of Mus musculus (Mouse).